The chain runs to 89 residues: Dynein light chain 2, cytoplasmic (89 aa).

It belongs to the dynein light chain family. As to quaternary structure, homodimer. The cytoplasmic dynein 1 complex consists of two catalytic heavy chains (HCs) and a number of non-catalytic subunits which present intermediate chains (ICs), light intermediate chains (LICs) and light chains (LCs); the composition seems to vary in respect to the IC, LIC and LC composition. The heavy chain homodimer serves as a scaffold for the probable homodimeric assembly of the respective non-catalytic subunits. Dynein ICs and LICs bind directly to the HC dimer and the LCs assemble on the IC dimer. Interacts with DYNC1I1. Interacts with BMF. Component of the myosin V motor complex. Interacts with BCAS1. Interacts with Basson/BSN. Interacts with AMBRA1 (via TQT motifs); tethering AMBRA1 to the cytoskeleton. Interacts with IQUB.

The protein resides in the cytoplasm. Its subcellular location is the cytoskeleton. In terms of biological role, acts as one of several non-catalytic accessory components of the cytoplasmic dynein 1 complex that are thought to be involved in linking dynein to cargos and to adapter proteins that regulate dynein function. Cytoplasmic dynein 1 acts as a motor for the intracellular retrograde motility of vesicles and organelles along microtubules. May play a role in changing or maintaining the spatial distribution of cytoskeletal structures. In Homo sapiens (Human), this protein is Dynein light chain 2, cytoplasmic (DYNLL2).